Reading from the N-terminus, the 62-residue chain is Large ribosomal subunit protein bL28 (62 aa).

The protein belongs to the bacterial ribosomal protein bL28 family.

The sequence is that of Large ribosomal subunit protein bL28 from Staphylococcus haemolyticus (strain JCSC1435).